The chain runs to 324 residues: Quinolinate synthase 2 (324 aa).

Residues His48 and Ser66 each contribute to the iminosuccinate site. [4Fe-4S] cluster is bound at residue Cys111. Iminosuccinate contacts are provided by residues 137–139 (YVN) and Ser154. [4Fe-4S] cluster is bound at residue Cys196. Residues 222 to 224 (HPE) and Thr239 contribute to the iminosuccinate site. Cys282 provides a ligand contact to [4Fe-4S] cluster.

Belongs to the quinolinate synthase family. Type 2 subfamily. Requires [4Fe-4S] cluster as cofactor.

It localises to the cytoplasm. The enzyme catalyses iminosuccinate + dihydroxyacetone phosphate = quinolinate + phosphate + 2 H2O + H(+). It participates in cofactor biosynthesis; NAD(+) biosynthesis; quinolinate from iminoaspartate: step 1/1. In terms of biological role, catalyzes the condensation of iminoaspartate with dihydroxyacetone phosphate to form quinolinate. The chain is Quinolinate synthase 2 from Mesorhizobium japonicum (strain LMG 29417 / CECT 9101 / MAFF 303099) (Mesorhizobium loti (strain MAFF 303099)).